Consider the following 108-residue polypeptide: Evasin P1127 (108 aa).

The signal sequence occupies residues 1–28; that stretch reads MEAKTFAFLEIAMFIALGIQTFVAVTDA. Disulfide bonds link C41–C63, C45–C65, and C56–C76. N-linked (GlcNAc...) asparagine glycosylation is present at N44. N89 is a glycosylation site (N-linked (GlcNAc...) asparagine).

It is found in the secreted. Functionally, salivary chemokine-binding protein which binds to host chemokines CXCL1, CXCL2, CXCL3, CXCL5 and CXCL8. The sequence is that of Evasin P1127 from Ixodes ricinus (Common tick).